The following is a 371-amino-acid chain: GTPase Obg (371 aa).

One can recognise an Obg domain in the interval 1–159 (MKFLDQAKVY…KTIWLRLKLI (159 aa)). Residues 160–327 (ADAGLVGLPN…VLRALRDIIV (168 aa)) form the OBG-type G domain. GTP-binding positions include 166–173 (GLPNAGKS), 191–195 (FTTLH), 212–215 (DIPG), 279–282 (SQID), and 308–310 (SAI). Mg(2+) contacts are provided by Ser173 and Thr193. Residues 337–371 (APMKALKVRHRDMQSSGNEGESEDNSDRDDEEQQG) form a disordered region. Over residues 356 to 371 (GESEDNSDRDDEEQQG) the composition is skewed to acidic residues.

This sequence belongs to the TRAFAC class OBG-HflX-like GTPase superfamily. OBG GTPase family. As to quaternary structure, monomer. Mg(2+) serves as cofactor.

It is found in the cytoplasm. Its function is as follows. An essential GTPase which binds GTP, GDP and possibly (p)ppGpp with moderate affinity, with high nucleotide exchange rates and a fairly low GTP hydrolysis rate. Plays a role in control of the cell cycle, stress response, ribosome biogenesis and in those bacteria that undergo differentiation, in morphogenesis control. The protein is GTPase Obg of Rhizobium rhizogenes (strain K84 / ATCC BAA-868) (Agrobacterium radiobacter).